A 336-amino-acid polypeptide reads, in one-letter code: Phospho-N-acetylmuramoyl-pentapeptide-transferase (336 aa).

The next 10 membrane-spanning stretches (helical) occupy residues 3–23, 53–73, 78–98, 118–138, 143–163, 174–194, 200–220, 226–246, 254–274, and 316–336; these read LTLI…PYFI, GGTV…LFSI, SLAL…IGFL, LALQ…PSGI, VFGY…FWVV, GIDG…GVIA, FDVL…FCFN, VFMG…ISIA, LIIG…VFYF, and AFLW…LYVF.

It belongs to the glycosyltransferase 4 family. MraY subfamily. The cofactor is Mg(2+).

The protein localises to the cell membrane. It carries out the reaction UDP-N-acetyl-alpha-D-muramoyl-L-alanyl-gamma-D-glutamyl-L-lysyl-D-alanyl-D-alanine + di-trans,octa-cis-undecaprenyl phosphate = Mur2Ac(oyl-L-Ala-gamma-D-Glu-L-Lys-D-Ala-D-Ala)-di-trans,octa-cis-undecaprenyl diphosphate + UMP. It functions in the pathway cell wall biogenesis; peptidoglycan biosynthesis. In terms of biological role, catalyzes the initial step of the lipid cycle reactions in the biosynthesis of the cell wall peptidoglycan: transfers peptidoglycan precursor phospho-MurNAc-pentapeptide from UDP-MurNAc-pentapeptide onto the lipid carrier undecaprenyl phosphate, yielding undecaprenyl-pyrophosphoryl-MurNAc-pentapeptide, known as lipid I. The protein is Phospho-N-acetylmuramoyl-pentapeptide-transferase of Streptococcus pyogenes serotype M18 (strain MGAS8232).